The primary structure comprises 395 residues: WW domain-containing transcription regulator protein 1 (395 aa).

Residue K46 forms a Glycyl lysine isopeptide (Lys-Gly) (interchain with G-Cter in ubiquitin) linkage. The interval 52 to 116 is disordered; the sequence is FFKEPDSGSH…AQQHAHLRQQ (65 aa). Polar residues predominate over residues 61–70; sequence HSRQSSTDSS. S62 is modified (phosphoserine). The residue at position 89 (S89) is a Phosphoserine; by LATS2. One can recognise a WW domain in the interval 124-157; the sequence is LPLPPGWEMTFTATGQRYFLNHIEKITTWQDPRK. The interval 221–395 is required for interaction with PALS1; it reads PNALTTQQQQ…NKSEPFLTWL (175 aa). The stretch at 224 to 258 forms a coiled coil; sequence LTTQQQQQQKLRLQRIQMERERIRMRQEELMRQEA. Residues 277–293 are compositionally biased toward polar residues; the sequence is PAMSTDMRSVTNSSSDP. Residues 277–308 are disordered; the sequence is PAMSTDMRSVTNSSSDPFLNGGPYHSREQSTD. S290 is subject to Phosphoserine. Phosphoserine; by LATS2 is present on S306. A PDZ-binding motif is present at residues 389–395; the sequence is EPFLTWL.

As to quaternary structure, binds to SLC9A3R2 via the PDZ motif at the plasma membrane. Binds to YWHAZ in vivo and in vitro through the phosphoserine-binding motif RSHSSP. Interacts (via coiled-coil domain) with SMAD2 (via MH1 domain), SMAD3 and SMAD4. Interacts with MED15. Interacts with PAX8 and NKX2-1. Interacts with TEAD1, TEAD2, TEAD3 and TEAD4. Interacts (via WW domain) with PALS1. Interacts with LATS1. Interacts with YAP1 (when phosphorylated at 'Ser-112'). Interacts (via WW domain) with PRRG4 (via cytoplasmic domain). Interacts (via WW domain) with AMOTL2 (via PPXY motif); the interaction promotes WWTR1/TAZ localization to the cytoplasm and tight junctions, thereby inhibiting its transcriptional coactivator properties. Interacts (via WW domain) with AMOT; the interaction facilitates translocation of WWTR1/TAZ to the cytoplasm. Post-translationally, phosphorylated by LATS2 and STK3/MST2. Phosphorylation by LATS2 results in creation of 14-3-3 binding sites, retention in the cytoplasm, and functional inactivation. Phosphorylation results in the inhibition of transcriptional coactivation through YWHAZ-mediated nuclear export. In terms of processing, ubiquitinated at Lys-46; leading to proteasomal degradation. Deubiquitinated and stabilized by UCHL1 at Lys-46; leading to inhibition of osteoclastogenesis. As to expression, highly expressed in kidney, heart, placenta and lung.

It is found in the nucleus. It localises to the cytoplasm. Its subcellular location is the cell membrane. The protein resides in the cell junction. The protein localises to the tight junction. Transcriptional coactivator which acts as a downstream regulatory target in the Hippo signaling pathway that plays a pivotal role in organ size control and tumor suppression by restricting proliferation and promoting apoptosis. The core of this pathway is composed of a kinase cascade wherein STK3/MST2 and STK4/MST1, in complex with its regulatory protein SAV1, phosphorylates and activates LATS1/2 in complex with its regulatory protein MOB1, which in turn phosphorylates and inactivates YAP1 oncoprotein and WWTR1/TAZ. WWTR1 enhances PAX8 and NKX2-1/TTF1-dependent gene activation. In conjunction with YAP1, involved in the regulation of TGFB1-dependent SMAD2 and SMAD3 nuclear accumulation. Plays a key role in coupling SMADs to the transcriptional machinery such as the mediator complex. Regulates embryonic stem-cell self-renewal, promotes cell proliferation and epithelial-mesenchymal transition. This is WW domain-containing transcription regulator protein 1 from Mus musculus (Mouse).